The primary structure comprises 470 residues: Argininosuccinate lyase (470 aa).

This sequence belongs to the lyase 1 family. Argininosuccinate lyase subfamily.

Its subcellular location is the cytoplasm. The catalysed reaction is 2-(N(omega)-L-arginino)succinate = fumarate + L-arginine. It participates in amino-acid biosynthesis; L-arginine biosynthesis; L-arginine from L-ornithine and carbamoyl phosphate: step 3/3. This is Argininosuccinate lyase from Mycobacterium marinum (strain ATCC BAA-535 / M).